The chain runs to 193 residues: Apoptosis-associated speck-like protein containing a CARD (193 aa).

Residues 1–91 (MGRARDAILD…AEQLQTTKEE (91 aa)) enclose the Pyrin domain. Residues Lys-55 and Lys-172 each participate in a glycyl lysine isopeptide (Lys-Gly) (interchain with G-Cter in ubiquitin) cross-link. In terms of domain architecture, CARD spans 105–193 (STARTGHFVD…PYLVMDLEQS (89 aa)). Phosphoserine is present on Ser-193.

In terms of assembly, self-associates; enforced oligomerization induces apoptosis, NF-kappa-B regulation and interleukin-1 beta secretion. Homooligomers can form disk-like particles of approximately 12 nm diameter and approximately 1 nm height. Component of several inflammasomes containing one pattern recognition receptor/sensor, such as NLRP2, NLRP3, NLRP6, NLRC4, AIM2, MEFV or NOD2, and probably NLRC4 or NLRP12. Major component of the ASC pyroptosome, a 1-2 um supramolecular assembly (one per macrophage cell) which consists of oligomerized PYCARD dimers and CASP1. Interacts with CASP1 (precursor form); the interaction induces activation of CASP1 leading to the processing of interleukin-1 beta; PYCARD competes with RIPK2 for binding to CASP1. Interacts with NLRP3; the interaction requires the homooligomerization of NLRP3. Interacts with NLRP2, NLRC4, MEFV, CARD16, AIM2, NOD2, RIGI, RIPK2, PYDC1, PYDC2, NLRP10, CHUK, IKBKB and BAX. Interacts with CASP8. Component of the AIM2 PANoptosome complex, a multiprotein complex that drives inflammatory cell death (PANoptosis). Post-translationally, phosphorylated. 'Lys-63'-linked polyubiquitination by TRAF3 is critical for speck formation and inflammasome activation. 'Lys-63'-linked deubiquitinated by USP50; a crucial step for NLRP3-mediated inflammasome activation. 'Lys-63'-linked polyubiquitination by PELI1 is also critical for speck formation and inflammasome activation. Deubiquitinated by USP3 that cleaves 'Lys-48'-linked ubiquitin chains and strengthens its stability by blocking proteasomal degradation. Expressed in small intestine, colon, thymus, spleen, brain, heart, skeletal muscle, kidney, lung and liver.

It localises to the cytoplasm. The protein resides in the inflammasome. It is found in the endoplasmic reticulum. Its subcellular location is the mitochondrion. The protein localises to the nucleus. Functions as a key mediator in apoptosis and inflammation. Promotes caspase-mediated apoptosis involving predominantly caspase-8 and also caspase-9 in a probable cell type-specific manner. Involved in activation of the mitochondrial apoptotic pathway, promotes caspase-8-dependent proteolytic maturation of BID independently of FADD in certain cell types and also mediates mitochondrial translocation of BAX and activates BAX-dependent apoptosis coupled to activation of caspase-9, -2 and -3. Involved in innate immune response by acting as an integral adapter in the assembly of various inflammasomes (NLRP2, NLRP3, NLRP6 and AIM2) which recruit and activate caspase-1 leading to processing and secretion of pro-inflammatory cytokines. Caspase-1-dependent inflammation leads to macrophage pyroptosis, a form of cell death. The function as activating adapter in different types of inflammasomes is mediated by the pyrin and CARD domains and their homotypic interactions. Clustered PYCARD nucleates the formation of caspase-1 filaments through the interaction of their respective CARD domains, acting as a platform for of caspase-1 polymerization. In the NLRC4 inflammasomes seems not be required but facilitates the processing of procaspase-1. In cooperation with NOD2 involved in an inflammasome activated by bacterial muramyl dipeptide leading to caspase-1 activation. May be involved in RIGI-triggered pro-inflammatory responses and inflammasome activation. In collaboration with AIM2 which detects cytosolic double-stranded DNA may also be involved in a caspase-1-independent cell death that involves caspase-8. In adaptive immunity may be involved in maturation of dendritic cells to stimulate T-cell immunity and in cytoskeletal rearrangements coupled to chemotaxis and antigen uptake may be involved in post-transcriptional regulation of the guanine nucleotide exchange factor DOCK2; the latter function is proposed to involve the nuclear form. Also involved in transcriptional activation of cytokines and chemokines independent of the inflammasome; this function may involve AP-1, NF-kappa-B, MAPK and caspase-8 signaling pathways. For regulation of NF-kappa-B activating and inhibiting functions have been reported. Modulates NF-kappa-B induction at the level of the IKK complex by inhibiting kinase activity of CHUK and IKBK. Proposed to compete with RIPK2 for association with CASP1 thereby down-regulating CASP1-mediated RIPK2-dependent NF-kappa-B activation and activating interleukin-1 beta processing. Modulates host resistance to DNA virus infection, probably by inducing the cleavage of and inactivating CGAS in presence of cytoplasmic double-stranded DNA. This chain is Apoptosis-associated speck-like protein containing a CARD (Pycard), found in Mus musculus (Mouse).